The sequence spans 175 residues: Peptide deformylase (175 aa).

Residues cysteine 94 and histidine 136 each coordinate Fe cation. Residue glutamate 137 is part of the active site. Histidine 140 contacts Fe cation.

The protein belongs to the polypeptide deformylase family. Fe(2+) serves as cofactor.

It carries out the reaction N-terminal N-formyl-L-methionyl-[peptide] + H2O = N-terminal L-methionyl-[peptide] + formate. Its function is as follows. Removes the formyl group from the N-terminal Met of newly synthesized proteins. Requires at least a dipeptide for an efficient rate of reaction. N-terminal L-methionine is a prerequisite for activity but the enzyme has broad specificity at other positions. The polypeptide is Peptide deformylase (Brucella suis biovar 1 (strain 1330)).